Here is a 602-residue protein sequence, read N- to C-terminus: Elongation factor 4 (602 aa).

Residues 7-189 (RNIRNFSIIA…AIVQRIPAPQ (183 aa)) enclose the tr-type G domain. Residues 19–24 (DHGKST) and 136–139 (NKID) contribute to the GTP site.

The protein belongs to the TRAFAC class translation factor GTPase superfamily. Classic translation factor GTPase family. LepA subfamily.

The protein localises to the cell inner membrane. It carries out the reaction GTP + H2O = GDP + phosphate + H(+). Required for accurate and efficient protein synthesis under certain stress conditions. May act as a fidelity factor of the translation reaction, by catalyzing a one-codon backward translocation of tRNAs on improperly translocated ribosomes. Back-translocation proceeds from a post-translocation (POST) complex to a pre-translocation (PRE) complex, thus giving elongation factor G a second chance to translocate the tRNAs correctly. Binds to ribosomes in a GTP-dependent manner. This Xylella fastidiosa (strain M23) protein is Elongation factor 4.